The primary structure comprises 251 residues: Pyruvate formate-lyase-activating enzyme (251 aa).

The 230-residue stretch at 15–244 (VDGPGLRYIL…KEAYRYVNFN (230 aa)) folds into the Radical SAM core domain. The [4Fe-4S] cluster site is built by C29, C33, and C36. Residues 35-37 (YCH), G79, 134-136 (DIK), and H207 each bind S-adenosyl-L-methionine.

This sequence belongs to the organic radical-activating enzymes family. [4Fe-4S] cluster is required as a cofactor.

The protein resides in the cytoplasm. The catalysed reaction is glycyl-[formate C-acetyltransferase] + reduced [flavodoxin] + S-adenosyl-L-methionine = glycin-2-yl radical-[formate C-acetyltransferase] + semiquinone [flavodoxin] + 5'-deoxyadenosine + L-methionine + H(+). In terms of biological role, activation of pyruvate formate-lyase under anaerobic conditions by generation of an organic free radical, using S-adenosylmethionine and reduced flavodoxin as cosubstrates to produce 5'-deoxy-adenosine. The sequence is that of Pyruvate formate-lyase-activating enzyme (pflA) from Staphylococcus epidermidis (strain ATCC 12228 / FDA PCI 1200).